The chain runs to 345 residues: UDP-N-acetylenolpyruvoylglucosamine reductase (345 aa).

In terms of domain architecture, FAD-binding PCMH-type spans 27 to 197 (FDASAELAYE…TKVVFKLPKQ (171 aa)). Residue Arg174 is part of the active site. The Proton donor role is filled by Ser245. The active site involves Glu341.

The protein belongs to the MurB family. The cofactor is FAD.

Its subcellular location is the cytoplasm. It carries out the reaction UDP-N-acetyl-alpha-D-muramate + NADP(+) = UDP-N-acetyl-3-O-(1-carboxyvinyl)-alpha-D-glucosamine + NADPH + H(+). The protein operates within cell wall biogenesis; peptidoglycan biosynthesis. Functionally, cell wall formation. The polypeptide is UDP-N-acetylenolpyruvoylglucosamine reductase (Polynucleobacter asymbioticus (strain DSM 18221 / CIP 109841 / QLW-P1DMWA-1) (Polynucleobacter necessarius subsp. asymbioticus)).